Consider the following 102-residue polypeptide: Large ribosomal subunit protein bL21 (102 aa).

This sequence belongs to the bacterial ribosomal protein bL21 family. In terms of assembly, part of the 50S ribosomal subunit. Contacts protein L20.

In terms of biological role, this protein binds to 23S rRNA in the presence of protein L20. The polypeptide is Large ribosomal subunit protein bL21 (Geobacter sulfurreducens (strain ATCC 51573 / DSM 12127 / PCA)).